The sequence spans 1081 residues: Importin-4 (1081 aa).

Met-1 is subject to N-acetylmethionine. Residues 24–90 form the Importin N-terminal domain; sequence ATEQLQIVLR…KSLILTALQR (67 aa). HEAT repeat units follow at residues 348-385, 390-427, 431-471, 475-513, 895-932, and 936-974; these read KLCPQLMPMLEEALRSESPYQRKAGLLVLAVLSDGAGD, RLLPPLLQIVCKGLEDPSQVVRNAALFALGQFSENLQP, SYSR…NLGP, PYLPELMECMLQLLRNPSSPRAKELAVSALGAIATAAQA, QFVSRLLPVLLSTAQEADPEVRSNAIFGMGVLAEHGGH, and EHFPKLLGLLFPLLARERHDRVRDNICGALARLLMASPT.

It belongs to the importin beta family. Found in a cytosolic complex with ASF1 (ASF1A or ASF1B) and histones H3 and H4.

The protein resides in the cytoplasm. Its subcellular location is the nucleus. Functionally, nuclear transport receptor that mediates nuclear import of proteins, such as histones, RPS3A, TNP2 and VDR. Serves as receptor for nuclear localization signals (NLS) in cargo substrates. Is thought to mediate docking of the importin/substrate complex to the nuclear pore complex (NPC) through binding to nucleoporin and the complex is subsequently translocated through the pore by an energy requiring, Ran-dependent mechanism. At the nucleoplasmic side of the NPC, Ran binds to the importin, the importin/substrate complex dissociates and importin is re-exported from the nucleus to the cytoplasm where GTP hydrolysis releases Ran. The directionality of nuclear import is thought to be conferred by an asymmetric distribution of the GTP- and GDP-bound forms of Ran between the cytoplasm and nucleus. Mediates the nuclear import of the histone H3-H4 dimer when in complex with ASF1 (ASF1A or ASF1B). Mediates the ligand-independent nuclear import of vitamin D receptor (VDR). In vitro, mediates the nuclear import of human cytomegalovirus UL84 by recognizing a non-classical NLS. In Homo sapiens (Human), this protein is Importin-4 (IPO4).